The sequence spans 82 residues: MSDNIRTLQGRVLSNKMDKSITVAIERKVKHPLYGKFLKRTTKIHAHDEQNQCNAGDVVTIRECRPLSKTKSWTLVEVVSKA.

This sequence belongs to the universal ribosomal protein uS17 family. As to quaternary structure, part of the 30S ribosomal subunit.

Functionally, one of the primary rRNA binding proteins, it binds specifically to the 5'-end of 16S ribosomal RNA. The protein is Small ribosomal subunit protein uS17 of Shewanella piezotolerans (strain WP3 / JCM 13877).